We begin with the raw amino-acid sequence, 536 residues long: Protein ST7 homolog (536 aa).

The next 2 helical transmembrane spans lie at 3-23 (CSWT…LFFL) and 49-69 (FYVA…IFEW). The stretch at 192 to 219 (AEEDTETVAQAENVLRRALRAIENTLST) forms a coiled coil. The chain crosses the membrane as a helical span at residues 464 to 484 (STLGMLIQTFACLAICILAVL).

The protein belongs to the ST7 family.

The protein localises to the membrane. The protein is Protein ST7 homolog of Caenorhabditis briggsae.